We begin with the raw amino-acid sequence, 498 residues long: ATP synthase subunit alpha 1 (498 aa).

This sequence belongs to the ATPase alpha/beta chains family. F-type ATPases have 2 components, CF(1) - the catalytic core - and CF(0) - the membrane proton channel. CF(1) has five subunits: alpha(3), beta(3), gamma(1), delta(1), epsilon(1). CF(0) has three main subunits: a(1), b(2) and c(9-12). The alpha and beta chains form an alternating ring which encloses part of the gamma chain. CF(1) is attached to CF(0) by a central stalk formed by the gamma and epsilon chains, while a peripheral stalk is formed by the delta and b chains.

The protein localises to the cell membrane. It carries out the reaction ATP + H2O + 4 H(+)(in) = ADP + phosphate + 5 H(+)(out). Its function is as follows. Produces ATP from ADP in the presence of a proton gradient across the membrane. The alpha chain is a regulatory subunit. This is ATP synthase subunit alpha 1 from Listeria monocytogenes serovar 1/2a (strain ATCC BAA-679 / EGD-e).